Here is a 357-residue protein sequence, read N- to C-terminus: NmrA-like family domain-containing oxidoreductase notA' (357 aa).

NADP(+) contacts are provided by residues 13–18 (GATGAQ), 39–43 (RKPES), 60–61 (DG), 81–83 (TNS), K140, and 164–167 (YMDV).

The protein belongs to the NmrA-type oxidoreductase family.

Functionally, nmrA-like family domain-containing oxidoreductase; part of the gene cluster that mediates the biosynthesis of notoamide, a fungal indole alkaloid that belongs to a family of natural products containing a characteristic bicyclo[2.2.2]diazaoctane core. The first step of notoamide biosynthesis involves coupling of L-proline and L-tryptophan by the bimodular NRPS notE', to produce cyclo-L-tryptophan-L-proline called brevianamide F. The reverse prenyltransferase notF' then acts as a deoxybrevianamide E synthase and converts brevianamide F to deoxybrevianamide E via reverse prenylation at C-2 of the indole ring leading to the bicyclo[2.2.2]diazaoctane core. Deoxybrevianamide E is further hydroxylated at C-6 of the indole ring, likely catalyzed by the cytochrome P450 monooxygenase notG', to yield 6-hydroxy-deoxybrevianamide E. 6-hydroxy-deoxybrevianamide E is a specific substrate of the prenyltransferase notC' for normal prenylation at C-7 to produce 6-hydroxy-7-prenyl-deoxybrevianamide, also called notoamide S. As the proposed pivotal branching point in notoamide biosynthesis, notoamide S can be diverted to notoamide E through an oxidative pyran ring closure putatively catalyzed by either notH' cytochrome P450 monooxygenase or the notD' FAD-linked oxidoreductase. This step would be followed by an indole 2,3-epoxidation-initiated pinacol-like rearrangement catalyzed by the notB' FAD-dependent monooxygenase leading to the formation of notoamide C and notoamide D. On the other hand notoamide S is converted to notoamide T by notH' (or notD'), a bifunctional oxidase that also functions as the intramolecular Diels-Alderase responsible for generation of (-)-notoamide T. To generate antipodal (+)-notoaminide T, notH (or notD) in Aspergillus strain MF297-2 is expected to catalyze a Diels-Alder reaction leading to the opposite stereochemistry. The remaining oxidoreductase notD' (or notH') likely catalyzes the oxidative pyran ring formation to yield (-)-stephacidin A. The FAD-dependent monooxygenase notI' is highly similar to notB' and is predicted to catalyze a similar conversion from (-)-stephacidin A to (+)-notoamide B via the 2,3-epoxidation of (-)-stephacidin A followed by a pinacol-type rearrangement. Finally, it remains unclear which enzyme could be responsible for the final hydroxylation steps leading to notoamide A and sclerotiamide. In Aspergillus versicolor, this protein is NmrA-like family domain-containing oxidoreductase notA'.